The following is a 128-amino-acid chain: Holo-[acyl-carrier-protein] synthase (128 aa).

Residues Asp-8 and Glu-60 each coordinate Mg(2+).

This sequence belongs to the P-Pant transferase superfamily. AcpS family. Mg(2+) is required as a cofactor.

Its subcellular location is the cytoplasm. It catalyses the reaction apo-[ACP] + CoA = holo-[ACP] + adenosine 3',5'-bisphosphate + H(+). Functionally, transfers the 4'-phosphopantetheine moiety from coenzyme A to a Ser of acyl-carrier-protein. This Anaeromyxobacter dehalogenans (strain 2CP-C) protein is Holo-[acyl-carrier-protein] synthase.